Here is a 190-residue protein sequence, read N- to C-terminus: Potassium-transporting ATPase KdpC subunit (190 aa).

A helical transmembrane segment spans residues 10 to 30 (VLLLVLTGLTGFAYPLLSTAI).

Belongs to the KdpC family. As to quaternary structure, the system is composed of three essential subunits: KdpA, KdpB and KdpC.

It is found in the cell inner membrane. Functionally, part of the high-affinity ATP-driven potassium transport (or Kdp) system, which catalyzes the hydrolysis of ATP coupled with the electrogenic transport of potassium into the cytoplasm. This subunit acts as a catalytic chaperone that increases the ATP-binding affinity of the ATP-hydrolyzing subunit KdpB by the formation of a transient KdpB/KdpC/ATP ternary complex. The polypeptide is Potassium-transporting ATPase KdpC subunit (Sorangium cellulosum (strain So ce56) (Polyangium cellulosum (strain So ce56))).